The following is a 192-amino-acid chain: Adenylate kinase (192 aa).

An ATP-binding site is contributed by 10–15; sequence GAGKGT. Positions 30–59 are NMP; it reads STGDMLREVIRRETEIGKKAKAMINAGTLV. AMP contacts are provided by residues Thr-31, Arg-36, 57–59, 85–88, and Gln-92; these read TLV and GYPR. The LID stretch occupies residues 126 to 142; the sequence is KRVQETIIAGGQVRSDD. Arg-127 lines the ATP pocket. Arg-139 and Arg-150 together coordinate AMP. Ile-178 is a binding site for ATP.

The protein belongs to the adenylate kinase family. As to quaternary structure, monomer.

The protein resides in the cytoplasm. It catalyses the reaction AMP + ATP = 2 ADP. It functions in the pathway purine metabolism; AMP biosynthesis via salvage pathway; AMP from ADP: step 1/1. Catalyzes the reversible transfer of the terminal phosphate group between ATP and AMP. Plays an important role in cellular energy homeostasis and in adenine nucleotide metabolism. This is Adenylate kinase from Bartonella henselae (strain ATCC 49882 / DSM 28221 / CCUG 30454 / Houston 1) (Rochalimaea henselae).